Here is a 445-residue protein sequence, read N- to C-terminus: Probable glycine dehydrogenase (decarboxylating) subunit 1 (445 aa).

Belongs to the GcvP family. N-terminal subunit subfamily. The glycine cleavage system is composed of four proteins: P, T, L and H. In this organism, the P 'protein' is a heterodimer of two subunits.

The enzyme catalyses N(6)-[(R)-lipoyl]-L-lysyl-[glycine-cleavage complex H protein] + glycine + H(+) = N(6)-[(R)-S(8)-aminomethyldihydrolipoyl]-L-lysyl-[glycine-cleavage complex H protein] + CO2. In terms of biological role, the glycine cleavage system catalyzes the degradation of glycine. The P protein binds the alpha-amino group of glycine through its pyridoxal phosphate cofactor; CO(2) is released and the remaining methylamine moiety is then transferred to the lipoamide cofactor of the H protein. The polypeptide is Probable glycine dehydrogenase (decarboxylating) subunit 1 (Anaeromyxobacter dehalogenans (strain 2CP-C)).